The sequence spans 622 residues: 1-deoxy-D-xylulose-5-phosphate synthase (622 aa).

Residues H80 and 121 to 123 (GHS) contribute to the thiamine diphosphate site. A Mg(2+)-binding site is contributed by D152. Thiamine diphosphate-binding positions include 153–154 (GA), N181, Y288, and E369. N181 serves as a coordination point for Mg(2+).

This sequence belongs to the transketolase family. DXPS subfamily. Homodimer. The cofactor is Mg(2+). Requires thiamine diphosphate as cofactor.

It carries out the reaction D-glyceraldehyde 3-phosphate + pyruvate + H(+) = 1-deoxy-D-xylulose 5-phosphate + CO2. Its pathway is metabolic intermediate biosynthesis; 1-deoxy-D-xylulose 5-phosphate biosynthesis; 1-deoxy-D-xylulose 5-phosphate from D-glyceraldehyde 3-phosphate and pyruvate: step 1/1. In terms of biological role, catalyzes the acyloin condensation reaction between C atoms 2 and 3 of pyruvate and glyceraldehyde 3-phosphate to yield 1-deoxy-D-xylulose-5-phosphate (DXP). The chain is 1-deoxy-D-xylulose-5-phosphate synthase from Psychromonas ingrahamii (strain DSM 17664 / CCUG 51855 / 37).